A 228-amino-acid polypeptide reads, in one-letter code: Aquaporin Z (228 aa).

5 consecutive transmembrane segments (helical) span residues 1–21, 46–66, 82–102, 129–149, and 154–174; these read MLNK…GGCG, TVLT…NPAV, IPYW…LYVI, MMAG…IILG, and LAPA…IHLV. The NPA 1 motif lies at 63–65; sequence NPA. The NPA 2 motif lies at 184–186; the sequence is NPA. A helical transmembrane segment spans residues 205 to 225; it reads LFWVAPLVGAVIGAIIWKGLL.

The protein belongs to the MIP/aquaporin (TC 1.A.8) family. In terms of assembly, homotetramer.

Its subcellular location is the cell inner membrane. It carries out the reaction H2O(in) = H2O(out). Its function is as follows. Channel that permits osmotically driven movement of water in both directions. It is involved in the osmoregulation and in the maintenance of cell turgor during volume expansion in rapidly growing cells. It mediates rapid entry or exit of water in response to abrupt changes in osmolarity. The protein is Aquaporin Z of Brucella suis biovar 1 (strain 1330).